The primary structure comprises 245 residues: MTLDVDAQKKDEKLLLSTIQQEYKILAEYKMIESEKVSGIYVIPSYANSLQWFGVFFGRQGFYENSVFRFSILLPDGFPDDKAVPAIIFQHNVVHPLVCPYTNSLDISHAFPEWRCGEDHLWQVLKYIQAIFADPLDSIRSVANIQELSNPEASKLLNTNRDAYAALVQESIVESKSRVYDTPPTEDPHYIVFEKFQANVHGPVLDQIRKSRNTIVPAESGVGGAATGLSWVKVKEGDFKPLSIE.

Residues glutamine 20 to serine 177 enclose the UBC core domain.

The protein belongs to the ubiquitin-conjugating enzyme family. FTS subfamily.

This is Protein crossbronx (cbx) from Drosophila virilis (Fruit fly).